Here is a 155-residue protein sequence, read N- to C-terminus: 3-dehydroquinate dehydratase (155 aa).

Tyr31 functions as the Proton acceptor in the catalytic mechanism. Substrate is bound by residues Asn83, His89, and Asp96. His109 acts as the Proton donor in catalysis. Substrate is bound by residues 110–111 and Arg120; that span reads LS.

Belongs to the type-II 3-dehydroquinase family. In terms of assembly, homododecamer.

The catalysed reaction is 3-dehydroquinate = 3-dehydroshikimate + H2O. The protein operates within metabolic intermediate biosynthesis; chorismate biosynthesis; chorismate from D-erythrose 4-phosphate and phosphoenolpyruvate: step 3/7. In terms of biological role, catalyzes a trans-dehydration via an enolate intermediate. The protein is 3-dehydroquinate dehydratase of Laribacter hongkongensis (strain HLHK9).